The sequence spans 68 residues: UPF0434 protein BTH_I0741 (68 aa).

Belongs to the UPF0434 family.

This Burkholderia thailandensis (strain ATCC 700388 / DSM 13276 / CCUG 48851 / CIP 106301 / E264) protein is UPF0434 protein BTH_I0741.